The chain runs to 386 residues: O-methyltransferase aunE (386 aa).

Residue Trp200 participates in S-adenosyl-L-methionine binding. His299 (proton acceptor) is an active-site residue.

Belongs to the class I-like SAM-binding methyltransferase superfamily. Cation-independent O-methyltransferase family.

It functions in the pathway secondary metabolite biosynthesis. In terms of biological role, O-methyltransferase; part of the gene cluster that mediates the biosynthesis of aurasperone B, a dimeric gamma-naphthopyrone. The first step in the biosynthesis of aurasperone B is the production of gamma-naphthopyrone precursor YWA1 by the non-reducing polyketide synthase albA, via condensation of one acetyl-CoA starter unit with 6 malonyl-CoA units. YWA1 is then methylated by aunE at position C-6 to yield foncesin which is further methylated at position C-8 by aunD to produce fonsecin B. A key enzyme in the biosynthetic pathway is the cytochrome P450 monooxygenase aunB which catalyzes the oxidative dimerization of fonsecin B to aurasperone B. AunB also catalyzes the oxidative dimerization of rubrofusarin B into aurasperone A. The sequence is that of O-methyltransferase aunE from Aspergillus niger (strain ATCC MYA-4892 / CBS 513.88 / FGSC A1513).